The primary structure comprises 176 residues: Ribosome rescue factor SmrB (176 aa).

A Smr domain is found at 93–168 (LDLHGYRQSE…GDAALLVLID (76 aa)).

It belongs to the SmrB family. In terms of assembly, associates with collided ribosomes, but not with correctly translating polysomes.

Acts as a ribosome collision sensor. Detects stalled/collided disomes (pairs of ribosomes where the leading ribosome is stalled and a second ribosome has collided with it) and endonucleolytically cleaves mRNA at the 5' boundary of the stalled ribosome. Stalled/collided disomes form a new interface (primarily via the 30S subunits) that binds SmrB. Cleaved mRNA becomes available for tmRNA ligation, leading to ribosomal subunit dissociation and rescue of stalled ribosomes. This Shewanella baltica (strain OS195) protein is Ribosome rescue factor SmrB.